We begin with the raw amino-acid sequence, 209 residues long: Chromophore lyase CpcT/CpeT 1 (209 aa).

Belongs to the CpcT/CpeT biliprotein lyase family.

In terms of biological role, covalently attaches a chromophore to Cys residue(s) of phycobiliproteins. The chain is Chromophore lyase CpcT/CpeT 1 from Trichodesmium erythraeum (strain IMS101).